The following is a 688-amino-acid chain: Glycine--tRNA ligase beta subunit (688 aa).

The protein belongs to the class-II aminoacyl-tRNA synthetase family. Tetramer of two alpha and two beta subunits.

Its subcellular location is the cytoplasm. The enzyme catalyses tRNA(Gly) + glycine + ATP = glycyl-tRNA(Gly) + AMP + diphosphate. The sequence is that of Glycine--tRNA ligase beta subunit from Shewanella oneidensis (strain ATCC 700550 / JCM 31522 / CIP 106686 / LMG 19005 / NCIMB 14063 / MR-1).